The primary structure comprises 201 residues: UPF0301 protein BP0319 (201 aa).

Belongs to the UPF0301 (AlgH) family.

This chain is UPF0301 protein BP0319, found in Bordetella pertussis (strain Tohama I / ATCC BAA-589 / NCTC 13251).